We begin with the raw amino-acid sequence, 241 residues long: Ubiquinone biosynthesis O-methyltransferase (241 aa).

Arginine 42, glycine 62, aspartate 83, and methionine 127 together coordinate S-adenosyl-L-methionine.

The protein belongs to the methyltransferase superfamily. UbiG/COQ3 family.

The catalysed reaction is a 3-demethylubiquinol + S-adenosyl-L-methionine = a ubiquinol + S-adenosyl-L-homocysteine + H(+). It catalyses the reaction a 3-(all-trans-polyprenyl)benzene-1,2-diol + S-adenosyl-L-methionine = a 2-methoxy-6-(all-trans-polyprenyl)phenol + S-adenosyl-L-homocysteine + H(+). The protein operates within cofactor biosynthesis; ubiquinone biosynthesis. Its function is as follows. O-methyltransferase that catalyzes the 2 O-methylation steps in the ubiquinone biosynthetic pathway. The protein is Ubiquinone biosynthesis O-methyltransferase of Pectobacterium atrosepticum (strain SCRI 1043 / ATCC BAA-672) (Erwinia carotovora subsp. atroseptica).